The following is a 565-amino-acid chain: Probable protease Gilli_2517 (565 aa).

Its function is as follows. Probably a dedicated protease for substrate gasdermin bGSDM; cleaves the bGSDM precursor, releasing the pore-forming moiety, which integrates into the membrane and triggers cell death. Involved in defense against bacteriophages. Expression of bGSDM and this neighboring protease is not toxic in E.coli. The chain is Probable protease Gilli_2517 from Gillisia limnaea (strain DSM 15749 / LMG 21470 / R-8282).